The sequence spans 230 residues: Cytochrome c oxidase subunit 2 (230 aa).

Residues 1-14 (MAHPSQLGFQDAAS) are Mitochondrial intermembrane-facing. A helical membrane pass occupies residues 15 to 45 (PVMEELLHFHDHALMIVFLISTLVLYIIAAT). Over 46–59 (ASTKLTDKYILDSQ) the chain is Mitochondrial matrix. A helical membrane pass occupies residues 60-87 (EIEVIWTIMPAVILILIALPSLRILYLM). At 88 to 230 (DEINDPHLTV…NWSSLMLEDA (143 aa)) the chain is on the mitochondrial intermembrane side. 6 residues coordinate Cu cation: His161, Cys196, Glu198, Cys200, His204, and Met207. Glu198 contributes to the Mg(2+) binding site.

The protein belongs to the cytochrome c oxidase subunit 2 family. In terms of assembly, component of the cytochrome c oxidase (complex IV, CIV), a multisubunit enzyme composed of 14 subunits. The complex is composed of a catalytic core of 3 subunits MT-CO1, MT-CO2 and MT-CO3, encoded in the mitochondrial DNA, and 11 supernumerary subunits COX4I, COX5A, COX5B, COX6A, COX6B, COX6C, COX7A, COX7B, COX7C, COX8 and NDUFA4, which are encoded in the nuclear genome. The complex exists as a monomer or a dimer and forms supercomplexes (SCs) in the inner mitochondrial membrane with NADH-ubiquinone oxidoreductase (complex I, CI) and ubiquinol-cytochrome c oxidoreductase (cytochrome b-c1 complex, complex III, CIII), resulting in different assemblies (supercomplex SCI(1)III(2)IV(1) and megacomplex MCI(2)III(2)IV(2)). Found in a complex with TMEM177, COA6, COX18, COX20, SCO1 and SCO2. Interacts with TMEM177 in a COX20-dependent manner. Interacts with COX20. Interacts with COX16. Requires Cu cation as cofactor.

It is found in the mitochondrion inner membrane. It carries out the reaction 4 Fe(II)-[cytochrome c] + O2 + 8 H(+)(in) = 4 Fe(III)-[cytochrome c] + 2 H2O + 4 H(+)(out). In terms of biological role, component of the cytochrome c oxidase, the last enzyme in the mitochondrial electron transport chain which drives oxidative phosphorylation. The respiratory chain contains 3 multisubunit complexes succinate dehydrogenase (complex II, CII), ubiquinol-cytochrome c oxidoreductase (cytochrome b-c1 complex, complex III, CIII) and cytochrome c oxidase (complex IV, CIV), that cooperate to transfer electrons derived from NADH and succinate to molecular oxygen, creating an electrochemical gradient over the inner membrane that drives transmembrane transport and the ATP synthase. Cytochrome c oxidase is the component of the respiratory chain that catalyzes the reduction of oxygen to water. Electrons originating from reduced cytochrome c in the intermembrane space (IMS) are transferred via the dinuclear copper A center (CU(A)) of subunit 2 and heme A of subunit 1 to the active site in subunit 1, a binuclear center (BNC) formed by heme A3 and copper B (CU(B)). The BNC reduces molecular oxygen to 2 water molecules using 4 electrons from cytochrome c in the IMS and 4 protons from the mitochondrial matrix. The protein is Cytochrome c oxidase subunit 2 (mt-co2) of Tetraodon nigroviridis (Spotted green pufferfish).